The sequence spans 114 residues: Nucleoid-associated protein Tlet_0999 (114 aa).

The protein belongs to the YbaB/EbfC family. In terms of assembly, homodimer.

It localises to the cytoplasm. The protein resides in the nucleoid. Binds to DNA and alters its conformation. May be involved in regulation of gene expression, nucleoid organization and DNA protection. The sequence is that of Nucleoid-associated protein Tlet_0999 from Pseudothermotoga lettingae (strain ATCC BAA-301 / DSM 14385 / NBRC 107922 / TMO) (Thermotoga lettingae).